The primary structure comprises 258 residues: Enterotoxin type D (258 aa).

An N-terminal signal peptide occupies residues 1-25 (MKKFNILIALLFFTSLVISPLNVKA). The Zn(2+) site is built by D212, H248, H250, and D252.

This sequence belongs to the staphylococcal/streptococcal toxin family. As to quaternary structure, homodimer; zinc-dependent. Interacts with MHC class II molecules composed of alpha/HLA-DRA and beta/HLA-DRB1 chains. It depends on Zn(2+) as a cofactor.

It localises to the secreted. Its function is as follows. Staphylococcal enterotoxin that activates the host immune system by binding as unprocessed molecules to major histocompatibility (MHC) complex class II and T-cell receptor (TCR) molecules. In turn, this ternary complex activates a large number of T-lymphocytes initiating a systemic release of pro-inflammatory cytokines. In addition, induces B-cell proliferation and differentiation in the presence of T-cells. Causes also the intoxication staphylococcal food poisoning syndrome. The sequence is that of Enterotoxin type D (entD) from Staphylococcus aureus.